Here is a 664-residue protein sequence, read N- to C-terminus: Lysophospholipase 1 (664 aa).

The first 22 residues, 1–22, serve as a signal peptide directing secretion; that stretch reads MKLQSLLVSAAVLTSLTENVNA. Asn26, Asn33, Asn52, Asn78, Asn92, Asn123, Asn160, Asn170, Asn215, Asn277, Asn307, Asn345, Asn388, Asn459, Asn489, Asn513, Asn541, Asn565, and Asn582 each carry an N-linked (GlcNAc...) asparagine glycan. The PLA2c domain maps to 35-586; the sequence is TCDDDINLVR…TNYCWNGTID (552 aa). A lipid anchor (GPI-anchor amidated asparagine) is attached at Asn634. A propeptide spans 635–664 (removed in mature form); sequence AGNALVNYSNLNTNTFIGVLSVISAVFGLI.

This sequence belongs to the lysophospholipase family.

The protein localises to the cell membrane. It carries out the reaction a 1-acyl-sn-glycero-3-phosphocholine + H2O = sn-glycerol 3-phosphocholine + a fatty acid + H(+). It catalyses the reaction a 1-acyl-sn-glycero-3-phospho-(1D-myo-inositol) + H2O = sn-glycero-3-phospho-1D-myo-inositol + a fatty acid + H(+). The catalysed reaction is a 1-acyl-sn-glycero-3-phospho-L-serine + H2O = sn-glycero-3-phospho-L-serine + a fatty acid + H(+). The enzyme catalyses a 1,2-diacyl-sn-glycero-3-phospho-(1D-myo-inositol) + 2 H2O = sn-glycero-3-phospho-1D-myo-inositol + 2 a carboxylate + 2 H(+). It carries out the reaction a 1,2-diacyl-sn-glycero-3-phospho-L-serine + 2 H2O = sn-glycero-3-phospho-L-serine + 2 a carboxylate + 2 H(+). It catalyses the reaction 2 1-hexadecanoyl-sn-glycero-3-phosphocholine = 1,2-dihexadecanoyl-sn-glycero-3-phosphocholine + sn-glycerol 3-phosphocholine. The catalysed reaction is 1-hexadecanoyl-sn-glycero-3-phosphocholine + H2O = sn-glycerol 3-phosphocholine + hexadecanoate + H(+). The enzyme catalyses 1,2-dihexadecanoyl-sn-glycero-3-phosphocholine + H2O = 1-hexadecanoyl-sn-glycero-3-phosphocholine + hexadecanoate + H(+). Sequentially removes both fatty acyl groups from diacylglycerophospholipids and therefore has both phospholipase B and lysophospholipase activities. It also displays transacylase activity. Substrate preference is phosphatidylserine &gt; phosphatidylinositol &gt;&gt; phosphatidylcholine &gt; phosphatidylethanolamine. The substrate specificity is pH- and ion-dependent. In contrast with activities observed at optimum pH 3.5, the order of substrate preference at pH 5.5 is phosphatidylcholine = phosphatidylethanolamine &gt;&gt; phosphatidylinositol. Degrades predominantly phosphatidylcholine and to some extent phosphatidylinositol in vivo. This Saccharomyces cerevisiae (strain ATCC 204508 / S288c) (Baker's yeast) protein is Lysophospholipase 1.